The sequence spans 292 residues: Coiled-coil domain-containing protein 192 (292 aa).

The tract at residues 28 to 55 (SVVPESDTSERSSMTSGSSESDIPQENK) is disordered. Low complexity predominate over residues 38–49 (RSSMTSGSSESD). 2 coiled-coil regions span residues 65–174 (QMAF…LATA) and 222–258 (IMELSTQVSLQTERITQLKEVLEEKERKIQQLEAERS). Residues 251 to 267 (QQLEAERSPHPPQEVKD) show a composition bias toward basic and acidic residues. The disordered stretch occupies residues 251–292 (QQLEAERSPHPPQEVKDPPGCLPEAPVFSTHDIPPVVSDENL).

This Homo sapiens (Human) protein is Coiled-coil domain-containing protein 192.